We begin with the raw amino-acid sequence, 77 residues long: Acyl carrier protein (77 aa).

Residues 2–77 (ADTLERVTKI…DAVNYIQNQQ (76 aa)) form the Carrier domain. Ser37 bears the O-(pantetheine 4'-phosphoryl)serine mark.

The protein belongs to the acyl carrier protein (ACP) family. 4'-phosphopantetheine is transferred from CoA to a specific serine of apo-ACP by AcpS. This modification is essential for activity because fatty acids are bound in thioester linkage to the sulfhydryl of the prosthetic group.

It is found in the cytoplasm. It functions in the pathway lipid metabolism; fatty acid biosynthesis. Carrier of the growing fatty acid chain in fatty acid biosynthesis. In Bacillus subtilis (strain 168), this protein is Acyl carrier protein (acpA).